The chain runs to 509 residues: SH2 domain-containing adapter protein B (509 aa).

Disordered regions lie at residues 1–103 (MAKW…GSSL) and 144–178 (SGAG…EVRY). The tract at residues 1–410 (MAKWLNKYFS…PAVPLEKQIW (410 aa)) is mediates interaction with LAT, PTK2/FAK1, JAK1 and JAK3. Low complexity predominate over residues 44-61 (VPQASSAASASCGPATAS). The segment covering 62–79 (CFSASSGSLPDDSGSTSD) has biased composition (polar residues). Position 102 is a phosphoserine (S102). A compositionally biased stretch (low complexity) spans 144–158 (SGAGAAASSSSSSGS). K187 is covalently cross-linked (Glycyl lysine isopeptide (Lys-Gly) (interchain with G-Cter in SUMO2)). Residues 229–385 (AEESGAGKKD…APGGGFKPIK (157 aa)) are disordered. Basic and acidic residues-rich tracts occupy residues 233–242 (GAGKKDKVTI) and 250–262 (FDAK…KAGK). A phosphoserine mark is found at S307 and S317. Residues 307-317 (SVDSDSESTVS) are compositionally biased toward polar residues. The segment covering 319–334 (RLRESKLPQDDDRPAD) has biased composition (basic and acidic residues). S388 is subject to Phosphoserine. The 95-residue stretch at 410-504 (WYHGAISRGD…AEHLSLLYPV (95 aa)) folds into the SH2 domain.

As to quaternary structure, interacts with PTPN11. Interacts with phosphorylated 'Tyr-720' of the ligand-activated receptor PDGFRA via its SH2 domain. Interacts with the ligand-activated receptors PDGFRB, FGFR1, KDR/VEGFR2, IL2RB and IL2RG. Interacts with EPS8 and V-SRC. Interacts with GRB2 and GRAP. Interacts with CD3Z. Interacts with tyrosine-phosphorylated LAT upon T-cell antigen receptor activation. Interacts with PLCG1. Interacts with ZAP70, LCP2/SLP-76, VAV1 and GRAP2. Interacts with JAK1 and JAK3. Interacts with PTK2/FAK1. Interacts with CRK/CrKII. Interacts with IRS2. Phosphorylated upon PDGFRA, PDGFRB, TCR, IL2 receptor, FGFR1 or VEGFR2 activation. In terms of tissue distribution, widely expressed.

The protein resides in the cytoplasm. The protein localises to the cell membrane. Functionally, adapter protein which regulates several signal transduction cascades by linking activated receptors to downstream signaling components. May play a role in angiogenesis by regulating FGFR1, VEGFR2 and PDGFR signaling. May also play a role in T-cell antigen receptor/TCR signaling, interleukin-2 signaling, apoptosis and neuronal cells differentiation by mediating basic-FGF and NGF-induced signaling cascades. May also regulate IRS1 and IRS2 signaling in insulin-producing cells. This chain is SH2 domain-containing adapter protein B (SHB), found in Homo sapiens (Human).